We begin with the raw amino-acid sequence, 58 residues long: MLVISNVYPSNLFTLINPFFAKLPEAYAIFDPIVDVMPIIPVFFFLLAFVWQAAVSFR.

Residues 1–21 (MLVISNVYPSNLFTLINPFFA) constitute a propeptide that is removed on maturation. The chain crosses the membrane as a helical span at residues 29–49 (IFDPIVDVMPIIPVFFFLLAF).

This sequence belongs to the PsbK family. As to quaternary structure, PSII is composed of 1 copy each of membrane proteins PsbA, PsbB, PsbC, PsbD, PsbE, PsbF, PsbH, PsbI, PsbJ, PsbK, PsbL, PsbM, PsbT, PsbX, PsbY, PsbZ, Psb30/Ycf12, at least 3 peripheral proteins of the oxygen-evolving complex and a large number of cofactors. It forms dimeric complexes.

It localises to the plastid. The protein resides in the chloroplast thylakoid membrane. Functionally, one of the components of the core complex of photosystem II (PSII). PSII is a light-driven water:plastoquinone oxidoreductase that uses light energy to abstract electrons from H(2)O, generating O(2) and a proton gradient subsequently used for ATP formation. It consists of a core antenna complex that captures photons, and an electron transfer chain that converts photonic excitation into a charge separation. This is Photosystem II reaction center protein K from Psilotum nudum (Whisk fern).